A 92-amino-acid polypeptide reads, in one-letter code: Small ribosomal subunit protein uS19c (92 aa).

It belongs to the universal ribosomal protein uS19 family.

The protein resides in the plastid. It is found in the chloroplast. Protein S19 forms a complex with S13 that binds strongly to the 16S ribosomal RNA. This is Small ribosomal subunit protein uS19c from Liriodendron tulipifera (Tuliptree).